We begin with the raw amino-acid sequence, 833 residues long: MTPLFDLEEPPKRVLLVDGHHLAYRTFYALSLTTSRGEPVQMVYGFARSLLKALKEDGQAVVVVFDAKAPSFRHEAYEAYKAGRAPTPEDFPRQLALVKRLVDLLGLVRLEAPGYEADDVLGTLAKKAEREGMEVRILTGDRDFFQLLSEKVSVLLPDGTLVTPKDVQEKYGVPPERWVDFRALTGDRSDNIPGVAGIGEKTALRLLAEWGSVENLLKNLDRVKPDSLRRKIEAHLEDLHLSLDLARIRTDLPLEVDFKALRRRTPDLEGLRAFLEELEFGSLLHEFGLLGGEKPREEAPWPPPEGAFVGFLLSRKEPMWAELLALAAASEGRVHRATSPVEALADLKEARGFLAKDLAVLALREGVALDPTDDPLLVAYLLDPANTHPEGVARRYGGEFTEDAAERALLSERLFQNLFPRLSEKLLWLYQEVERPLSRVLAHMEARGVRLDVPLLEALSFELEKEMERLEGEVFRLAGHPFNLNSRDQLERVLFDELGLTPVGRTEKTGKRSTAQGALEALRGAHPIVELILQYRELSKLKSTYLDPLPRLVHPRTGRLHTRFNQTATATGRLSSSDPNLQNIPVRTPLGQRIRKAFVAEEGWLLLAADYSQIELRVLAHLSGDENLKRVFREGKDIHTETAAWMFGLDPALVDPKMRRAAKTVNFGVLYGMSAHRLSQELGIDYKEAEAFIERYFQSFPKVRAWIERTLEEGRTRGYVETLFGRRRYVPDLASRVRSVREAAERMAFNMPVQGTAADLMKIAMVKLFPRLKPLGAHLLLQVHDELVLEVPEDRAEEAKALVKEVMENAYPLDVPLEVEVGVGRDWLEAKQD.

The region spanning 173–267 (VPPERWVDFR…FKALRRRTPD (95 aa)) is the 5'-3' exonuclease domain. Positions 412–833 (ERLFQNLFPR…GRDWLEAKQD (422 aa)) are polymerase.

This sequence belongs to the DNA polymerase type-A family.

The catalysed reaction is DNA(n) + a 2'-deoxyribonucleoside 5'-triphosphate = DNA(n+1) + diphosphate. In terms of biological role, in addition to polymerase activity, this DNA polymerase exhibits 5'-3' exonuclease activity. Unlikely to have 3'-5' exonuclease activity due to absence of a 3'-5' exonuclease domain. The chain is DNA polymerase I, thermostable (polA) from Thermus filiformis.